A 30-amino-acid polypeptide reads, in one-letter code: Cyclotide mden-E (30 aa).

Residues 1–30 (GIPCGESCVYIPCITAAIGCSCKSKVCYRN) constitute a cross-link (cyclopeptide (Gly-Asn)). Intrachain disulfides connect Cys-4/Cys-20, Cys-8/Cys-22, and Cys-13/Cys-27.

The protein belongs to the cyclotide family. Bracelet subfamily. In terms of processing, this is a cyclic peptide.

Probably participates in a plant defense mechanism. In Melicytus dentatus (Tree violet), this protein is Cyclotide mden-E.